The following is a 627-amino-acid chain: UvrABC system protein C (627 aa).

Residues 26–105 (PEPGVYFMRD…IKQHQPYFNV (80 aa)) enclose the GIY-YIG domain. One can recognise a UVR domain in the interval 215–250 (QELIDILSEQMEKAAEALNFEVAARIRDQIAGLKSL).

The protein belongs to the UvrC family. In terms of assembly, interacts with UvrB in an incision complex.

Its subcellular location is the cytoplasm. Functionally, the UvrABC repair system catalyzes the recognition and processing of DNA lesions. UvrC both incises the 5' and 3' sides of the lesion. The N-terminal half is responsible for the 3' incision and the C-terminal half is responsible for the 5' incision. This Nostoc sp. (strain PCC 7120 / SAG 25.82 / UTEX 2576) protein is UvrABC system protein C.